Here is a 497-residue protein sequence, read N- to C-terminus: DNA-dependent metalloprotease SPRTN (497 aa).

At M1 the chain carries N-acetylmethionine. Residues 46–213 (LQALFLQFND…KTCGGTYIKI (168 aa)) enclose the SprT-like domain. H112 is a Zn(2+) binding site. The active site involves E113. Residues H116 and H131 each coordinate Zn(2+). Position 231 is an N6-acetyllysine (K231). The SHP-box motif lies at 254–262 (FSGKGYVLG). Position 269 is a phosphoserine (S269). A Glycyl lysine isopeptide (Lys-Gly) (interchain with G-Cter in SUMO2) cross-link involves residue K304. The PIP-box motif lies at 326–333 (QSVLSSYF). Residue K342 forms a Glycyl lysine isopeptide (Lys-Gly) (interchain with G-Cter in SUMO2); alternate linkage. Residue K342 forms a Glycyl lysine isopeptide (Lys-Gly) (interchain with G-Cter in ubiquitin); alternate linkage. The segment at 344–459 (FRNVNGSPVK…ASAPQSLSSQ (116 aa)) is disordered. The span at 347–356 (VNGSPVKNGT) shows a compositional bias: polar residues. A Glycyl lysine isopeptide (Lys-Gly) (interchain with G-Cter in SUMO2) cross-link involves residue K362. The span at 383–404 (TSKVTAPASATVTSAAGTSATI) shows a compositional bias: low complexity. S384 carries the post-translational modification Phosphoserine. The Nuclear localization signal signature appears at 413–424 (DQFLNKRPRLED). Residues 420-432 (PRLEDRTALDTIK) show a composition bias toward basic and acidic residues. K432 participates in a covalent cross-link: Glycyl lysine isopeptide (Lys-Gly) (interchain with G-Cter in SUMO2). The span at 442-459 (RSSSQPTAASAPQSLSSQ) shows a compositional bias: low complexity. The UBZ4-type zinc finger occupies 462-489 (LVNCPVCQGVVVESQINEHLDRCLEGNK). 4 residues coordinate Zn(2+): C465, C468, H480, and C484.

It belongs to the Spartan family. As to quaternary structure, homodimer. Interacts (VIA PIP-box) with PCNA (when ubiquitinated). Interacts (via its SHP-box) with VCP/p97. Interacts with RAD18. Interacts with KCTD13 and POLD3. Zn(2+) serves as cofactor. Autocatalytically cleaved in response to double-stranded DNA-binding: autocatalytic cleavage takes place in trans and leads to inactivation. Post-translationally, monoubiquitinated; monoubiquitination promotes exclusion from chromatin. Deubiquitinated by VCPIP1: deubiquitination is required for subsequent acetylation and recruitment to chromatin and DNA damage sites. In terms of processing, acetylated following deubiquitination by VCPIP1, leading to recruitment to chromatin and DNA damage sites. Phosphorylation by CHEK1 promotes recruitment to chromatin.

Its subcellular location is the nucleus. The protein localises to the chromosome. With respect to regulation, DNA-binding activates the protease activity: single-stranded DNA-binding specifically activates ability to cleave covalent DNA-protein cross-links (DPCs). In contrast, double-stranded DNA-binding specifically activates autocatalytic cleavage, and subsequent inactivation. DNA-dependent metalloendopeptidase that mediates the proteolytic cleavage of covalent DNA-protein cross-links (DPCs) during DNA synthesis, thereby playing a key role in maintaining genomic integrity. DPCs are highly toxic DNA lesions that interfere with essential chromatin transactions, such as replication and transcription, and which are induced by reactive agents, such as UV light or formaldehyde. Associates with the DNA replication machinery and specifically removes DPCs during DNA synthesis. Catalyzes proteolytic cleavage of the HMCES DNA-protein cross-link following unfolding by the BRIP1/FANCJ helicase. Acts as a pleiotropic protease for DNA-binding proteins cross-linked with DNA, such as TOP1, TOP2A, histones H3 and H4. Mediates degradation of DPCs that are not ubiquitinated, while it is not able to degrade ubiquitinated DPCs. SPRTN activation requires polymerase collision with DPCs followed by helicase bypass of DPCs. Involved in recruitment of VCP/p97 to sites of DNA damage. Also acts as an activator of CHEK1 during normal DNA replication by mediating proteolytic cleavage of CHEK1, thereby promoting CHEK1 removal from chromatin and subsequent activation. Does not activate CHEK1 in response to DNA damage. May also act as a 'reader' of ubiquitinated PCNA: recruited to sites of UV damage and interacts with ubiquitinated PCNA and RAD18, the E3 ubiquitin ligase that monoubiquitinates PCNA. Facilitates chromatin association of RAD18 and is required for efficient PCNA monoubiquitination, promoting a feed-forward loop to enhance PCNA ubiquitination and translesion DNA synthesis. The sequence is that of DNA-dependent metalloprotease SPRTN from Mus musculus (Mouse).